A 183-amino-acid polypeptide reads, in one-letter code: Hypoxanthine/guanine phosphoribosyltransferase (183 aa).

The protein belongs to the purine/pyrimidine phosphoribosyltransferase family. Archaeal HPRT subfamily. In terms of assembly, homodimer.

Its subcellular location is the cytoplasm. It catalyses the reaction IMP + diphosphate = hypoxanthine + 5-phospho-alpha-D-ribose 1-diphosphate. The catalysed reaction is GMP + diphosphate = guanine + 5-phospho-alpha-D-ribose 1-diphosphate. The protein operates within purine metabolism; IMP biosynthesis via salvage pathway; IMP from hypoxanthine: step 1/1. In terms of biological role, catalyzes a salvage reaction resulting in the formation of IMP that is energically less costly than de novo synthesis. The sequence is that of Hypoxanthine/guanine phosphoribosyltransferase from Methanocaldococcus jannaschii (strain ATCC 43067 / DSM 2661 / JAL-1 / JCM 10045 / NBRC 100440) (Methanococcus jannaschii).